Consider the following 354-residue polypeptide: Lysophosphatidic acid receptor 3 (354 aa).

Topologically, residues 1–31 (MNECHYDKRMDFFYNRSNTDTADEWTGTKLV) are extracellular. N-linked (GlcNAc...) asparagine glycosylation is present at asparagine 15. A helical transmembrane segment spans residues 32–52 (IVLCVGTFFCLFIFFSNSLVI). Residues 53–67 (AAVITNRKFHFPFYY) lie on the Cytoplasmic side of the membrane. Residues 68-88 (LLANLAAADFFAGIAYVFLMF) form a helical membrane-spanning segment. Residues 89-101 (NTGPVSKTLTVNR) are Extracellular-facing. Residues 102–124 (WFLRQGLLDTSLTASLANLLVIA) traverse the membrane as a helical segment. The Cytoplasmic portion of the chain corresponds to 125-146 (VERHMSIMRMRVHSNLTKKRVT). The chain crosses the membrane as a helical span at residues 147-167 (LLILLVWAIAIFMGAVPTLGW). Topologically, residues 168–186 (NCLCNISACSSLAPIYSRS) are extracellular. An N-linked (GlcNAc...) asparagine glycan is attached at asparagine 172. A helical transmembrane segment spans residues 187–207 (YLIFWTVSNLLAFFIMVAVYV). Over 208–240 (RIYMYVKRKTNVLSPHTSGSISRRRAPMKLMKT) the chain is Cytoplasmic. The chain crosses the membrane as a helical span at residues 241–261 (VMTVLGAFVVCWTPGLVVLLL). The Extracellular segment spans residues 262-276 (DGLNCKQCNVQHVKR). The chain crosses the membrane as a helical span at residues 277–295 (WFLLLALLNSVMNPIIYSY). Over 296 to 354 (KDEDMYNTMRKMICCALQDSNTERRPSRNPSTIHSRSETGSQYLEDSISQGPVCNKNGS) the chain is Cytoplasmic. The S-palmitoyl cysteine moiety is linked to residue cysteine 309. A disordered region spans residues 315–354 (SNTERRPSRNPSTIHSRSETGSQYLEDSISQGPVCNKNGS). Residues 323 to 354 (RNPSTIHSRSETGSQYLEDSISQGPVCNKNGS) show a composition bias toward polar residues.

Belongs to the G-protein coupled receptor 1 family. Most abundantly expressed in testes, kidney, and lung, with moderate levels in small intestine, and low levels in heart, stomach, spleen, and adult and perinatal brain. Little or no expression in embryonic brain, liver, or thymus.

It is found in the cell membrane. Receptor for lysophosphatidic acid (LPA), a mediator of diverse cellular activities. Seems to be coupled to the G(i)/G(o) and G(q) families of heteromeric G proteins. This is Lysophosphatidic acid receptor 3 (Lpar3) from Mus musculus (Mouse).